A 128-amino-acid chain; its full sequence is Large ribosomal subunit protein bL17 (128 aa).

Belongs to the bacterial ribosomal protein bL17 family. Part of the 50S ribosomal subunit. Contacts protein L32.

This chain is Large ribosomal subunit protein bL17, found in Streptococcus agalactiae serotype Ia (strain ATCC 27591 / A909 / CDC SS700).